We begin with the raw amino-acid sequence, 338 residues long: uncharacterized protein (338 aa).

An N-terminal signal peptide occupies residues 1 to 29; the sequence is MIKQLYKNITICSLAISTALTVFPATSYA.

The protein belongs to the aerolysin family.

This is an uncharacterized protein from Staphylococcus aureus (strain Mu50 / ATCC 700699).